Consider the following 860-residue polypeptide: Protein argonaute-3 (860 aa).

The PAZ domain maps to 230 to 349 (PVIQFMCEVL…LPLEVCNIVA (120 aa)). The region spanning 518-819 (LIIVILPGKT…VAFRARYHLV (302 aa)) is the Piwi domain. The interaction with guide RNA stretch occupies residues 530–567 (YAEVKRAGDTLLGMATQCVQVKNVIKTSPQTLSNLCLK). A divalent metal cation is bound by residues Asp598, Glu638, and Asp670. Positions 758–805 (QGTSRPSHYHVLWDDNCFTADELQLLTYQLCHTYVRCTRSVSIPAPAY) are interaction with guide RNA. Residue His808 coordinates a divalent metal cation.

Belongs to the argonaute family. Ago subfamily.

It is found in the cytoplasm. Its subcellular location is the P-body. It catalyses the reaction Endonucleolytic cleavage to 5'-phosphomonoester.. In terms of biological role, required for RNA-mediated gene silencing (RNAi). Binds to short RNAs such as microRNAs (miRNAs) and represses the translation of mRNAs which are complementary to them. Possesses RNA slicer activity but only on select RNAs bearing 5'- and 3'-flanking sequences to the region of guide-target complementarity. This is Protein argonaute-3 (AGO3) from Gallus gallus (Chicken).